We begin with the raw amino-acid sequence, 345 residues long: N-acetyl-gamma-glutamyl-phosphate reductase (345 aa).

Cys149 is an active-site residue.

This sequence belongs to the NAGSA dehydrogenase family. Type 1 subfamily.

It localises to the cytoplasm. The catalysed reaction is N-acetyl-L-glutamate 5-semialdehyde + phosphate + NADP(+) = N-acetyl-L-glutamyl 5-phosphate + NADPH + H(+). It functions in the pathway amino-acid biosynthesis; L-arginine biosynthesis; N(2)-acetyl-L-ornithine from L-glutamate: step 3/4. Its function is as follows. Catalyzes the NADPH-dependent reduction of N-acetyl-5-glutamyl phosphate to yield N-acetyl-L-glutamate 5-semialdehyde. This chain is N-acetyl-gamma-glutamyl-phosphate reductase, found in Desulforapulum autotrophicum (strain ATCC 43914 / DSM 3382 / VKM B-1955 / HRM2) (Desulfobacterium autotrophicum).